The sequence spans 95 residues: uncharacterized protein (95 aa).

An N-terminal signal peptide occupies residues 1–17 (MTSSLVIYIFLWSRLIC).

This is an uncharacterized protein from Saccharomyces cerevisiae (strain ATCC 204508 / S288c) (Baker's yeast).